The primary structure comprises 285 residues: Homeobox protein Hox-A4 (285 aa).

Disordered stretches follow at residues 19–70 and 94–130; these read PFEE…APRA and ASPG…TTPA. Gly residues predominate over residues 27–41; that stretch reads GGPGGGDGAVGGGPG. Positions 44-70 are enriched in low complexity; the sequence is RPQSAPHLPAPNPHAARQPPAYYAPRA. The segment covering 106-118 has biased composition (pro residues); the sequence is GAHPSPAPQPPVP. The Antp-type hexapeptide signature appears at 159–164; sequence VYPWMK. The segment at residues 180 to 239 is a DNA-binding region (homeobox); sequence PKRSRTAYTRQQVLELEKEFHFNRYLTRRRRIEIAHTLCLSERQVKIWFQNRRMKWKKDH. The segment at 238 to 285 is disordered; that stretch reads DHKLPNTKMRSSNTASAPAGPPGKAQTHSPHHHPHPLPGASTPIPSSI.

It belongs to the Antp homeobox family. Deformed subfamily.

It localises to the nucleus. Sequence-specific transcription factor which is part of a developmental regulatory system that provides cells with specific positional identities on the anterior-posterior axis. Binds to sites in the 5'-flanking sequence of its coding region with various affinities. The consensus sequences of the high and low affinity binding sites are 5'-TAATGA[CG]-3' and 5'-CTAATTTT-3'. The chain is Homeobox protein Hox-A4 (Hoxa4) from Mus musculus (Mouse).